Here is a 204-residue protein sequence, read N- to C-terminus: Large ribosomal subunit protein eL15 (204 aa).

It belongs to the eukaryotic ribosomal protein eL15 family. As to quaternary structure, component of the large ribosomal subunit.

It is found in the cytoplasm. Its function is as follows. Component of the large ribosomal subunit. The ribosome is a large ribonucleoprotein complex responsible for the synthesis of proteins in the cell. In Silurus asotus (Amur catfish), this protein is Large ribosomal subunit protein eL15 (rpl15).